A 249-amino-acid polypeptide reads, in one-letter code: uncharacterized protein (249 aa).

An N-terminal signal peptide occupies residues methionine 1–alanine 43. The disordered stretch occupies residues alanine 40–valine 59. The NodB homology domain maps to proline 68–glycine 243.

This is an uncharacterized protein from Streptomyces coelicolor (strain ATCC BAA-471 / A3(2) / M145).